A 263-amino-acid chain; its full sequence is Aquaporin Lacbi1:247946 (263 aa).

Residues 1–18 (MKLTISHHKCAIRKVMAE) lie on the Cytoplasmic side of the membrane. The chain crosses the membrane as a helical span at residues 19–39 (FVGVALLVIFGAGTACQVVLS). At 40–45 (TNPSSF) the chain is on the extracellular side. The chain crosses the membrane as a helical span at residues 46–66 (LSINFGWAIGIATGAWVSAGI). The Cytoplasmic portion of the chain corresponds to 67–89 (SGGHINPAITIAMATYRGFPWRE). An NPA 1 motif is present at residues 72–74 (NPA). A helical transmembrane segment spans residues 90–110 (VPGYIFAQALGGFVGAALVYA). The Extracellular segment spans residues 111 to 143 (NYFHAIDIFEGGHIRTQATASLFATFALPYMTQ). Residues 144–164 (ASCFFSEFLATAVLFIVFLAL) traverse the membrane as a helical segment. The Cytoplasmic segment spans residues 165 to 169 (NDKHN). Residues 170–190 (GALTNGLLPFALFILFIGLGA) traverse the membrane as a helical segment. Residues 191 to 227 (SLGMQTGYAVNPARDFGPRLFLAMAGYGKAVFNYRRQ) lie on the Extracellular side of the membrane. An NPA 2 motif is present at residues 201 to 203 (NPA). The chain crosses the membrane as a helical span at residues 228-248 (YWIWAPIIAPILGAQAGGLLY). Residues 249–263 (DTSIYNGDDSPIKWR) lie on the Cytoplasmic side of the membrane.

The protein belongs to the MIP/aquaporin (TC 1.A.8) family.

The protein localises to the membrane. It catalyses the reaction H2O(in) = H2O(out). Its function is as follows. Water channel required to facilitate the transport of water across membranes. Shows low but significant water conductivity, but no glycerol nor ammonium transport activities. This Laccaria bicolor (strain S238N-H82 / ATCC MYA-4686) (Bicoloured deceiver) protein is Aquaporin Lacbi1:247946.